The primary structure comprises 1132 residues: DNA topoisomerase 2 (1132 aa).

Residues Asn68, Asn100, 137–139 (SSN), and 150–157 (GKNGLGVK) contribute to the ATP site. An interaction with DNA region spans residues 327-329 (NKP). 363–365 (QNK) contacts ATP. Residues 442-577 (CTLIVCEGLS…NLKDFPFISS (136 aa)) enclose the Toprim domain. Residues Glu448, Asp538, and Asp540 each contribute to the Mg(2+) site. Residues 713–1125 (LPHLIDGLKE…NEGQMWLKDI (413 aa)) enclose the Topo IIA-type catalytic domain. The active-site O-(5'-phospho-DNA)-tyrosine intermediate is Tyr803. Residues 979–988 (KLRSYIHTSN) form an interaction with DNA region.

Belongs to the type II topoisomerase family. The cofactor is Mg(2+). Mn(2+) serves as cofactor. Ca(2+) is required as a cofactor.

It catalyses the reaction ATP-dependent breakage, passage and rejoining of double-stranded DNA.. Functionally, can introduce negative superhelical turns into double-stranded circular DNA. This Acheta domesticus (House cricket) protein is DNA topoisomerase 2 (TOP2).